The primary structure comprises 442 residues: Cytochrome c biogenesis protein CcsB (442 aa).

3 consecutive transmembrane segments (helical) span residues 17 to 37 (LRLA…GTVI), 76 to 96 (TPWY…CTLT), and 162 to 182 (LGPI…ILGA).

This sequence belongs to the Ccs1/CcsB family. In terms of assembly, may interact with CcsA.

The protein resides in the cellular thylakoid membrane. Required during biogenesis of c-type cytochromes (cytochrome c6 and cytochrome f) at the step of heme attachment. This Thermosynechococcus vestitus (strain NIES-2133 / IAM M-273 / BP-1) protein is Cytochrome c biogenesis protein CcsB.